A 281-amino-acid chain; its full sequence is NAD kinase (281 aa).

Residue aspartate 61 is the Proton acceptor of the active site. NAD(+)-binding positions include 61–62, 134–135, arginine 145, aspartate 164, 175–180, and glutamine 234; these read DG, ND, and TAYSLS.

The protein belongs to the NAD kinase family. The cofactor is a divalent metal cation.

The protein resides in the cytoplasm. It catalyses the reaction NAD(+) + ATP = ADP + NADP(+) + H(+). Involved in the regulation of the intracellular balance of NAD and NADP, and is a key enzyme in the biosynthesis of NADP. Catalyzes specifically the phosphorylation on 2'-hydroxyl of the adenosine moiety of NAD to yield NADP. The polypeptide is NAD kinase (Clostridium botulinum (strain Loch Maree / Type A3)).